The primary structure comprises 206 residues: uncharacterized protein (206 aa).

Positions 1-22 (MPKLRLIGLTLLALSATAVSHA) are cleaved as a signal peptide. The SH3b domain occupies 23–89 (EETRYVSDEL…IPLKQLSTEP (67 aa)). The chain crosses the membrane as a helical span at residues 169 to 191 (IIMQWFMYGGGVLGLGLLLGLVL).

This sequence to H.influenzae HI_1605.

The protein localises to the membrane. This is an uncharacterized protein from Escherichia coli O157:H7.